A 275-amino-acid polypeptide reads, in one-letter code: MPIQKRKPTSAGRRFVVSVVNPDLHKGAPYAPLLEKKSKSGGRNNNGRITTRHIGGGHKQHYRKIDFKRNKDGIPAKVERLEYDPNRTAHIALVCYADGERRYIIAPKGLKAGDFIESGDASAIKVGNTLPLRNVPVGSVIHCIELKPGKGAQLARSAGASVQLVAREGQYATLRLRSGEMRKVEVECRATLGEVSNSEHSLRSLGKAGAKRWRGVRPTVRGVAMNPVDHPHGGGEGRTSGGRHPVSPWGTPTKGYKTRSNKRTDKMIVRRRNKK.

2 disordered regions span residues 34–59 (LEKK…GGHK) and 223–275 (VAMN…RNKK).

This sequence belongs to the universal ribosomal protein uL2 family. In terms of assembly, part of the 50S ribosomal subunit. Forms a bridge to the 30S subunit in the 70S ribosome.

In terms of biological role, one of the primary rRNA binding proteins. Required for association of the 30S and 50S subunits to form the 70S ribosome, for tRNA binding and peptide bond formation. It has been suggested to have peptidyltransferase activity; this is somewhat controversial. Makes several contacts with the 16S rRNA in the 70S ribosome. In Teredinibacter turnerae (strain ATCC 39867 / T7901), this protein is Large ribosomal subunit protein uL2.